Reading from the N-terminus, the 315-residue chain is HVA22-like protein h (315 aa).

Residues 148-315 (PKPKPKEKKQ…RKARSAGAPR (168 aa)) form a disordered region. The span at 173-190 (ATSQAASSNPQVRLQSKK) shows a compositional bias: polar residues. The segment covering 234–248 (PPGPPPPPPPPPPSP) has biased composition (pro residues).

It belongs to the DP1 family.

This is HVA22-like protein h (HVA22H) from Arabidopsis thaliana (Mouse-ear cress).